Reading from the N-terminus, the 397-residue chain is Elongation factor Tu (397 aa).

The region spanning lysine 10 to valine 207 is the tr-type G domain. A G1 region spans residues glycine 19–threonine 26. Position 19–26 (glycine 19–threonine 26) interacts with GTP. Residue threonine 26 participates in Mg(2+) binding. The segment at glycine 63–asparagine 67 is G2. The tract at residues aspartate 84–glycine 87 is G3. GTP-binding positions include aspartate 84 to histidine 88 and asparagine 139 to aspartate 142. Positions asparagine 139 to aspartate 142 are G4. Positions serine 177–leucine 179 are G5.

The protein belongs to the TRAFAC class translation factor GTPase superfamily. Classic translation factor GTPase family. EF-Tu/EF-1A subfamily. As to quaternary structure, monomer.

The protein localises to the cytoplasm. It carries out the reaction GTP + H2O = GDP + phosphate + H(+). Functionally, GTP hydrolase that promotes the GTP-dependent binding of aminoacyl-tRNA to the A-site of ribosomes during protein biosynthesis. This is Elongation factor Tu from Leifsonia xyli subsp. xyli (strain CTCB07).